We begin with the raw amino-acid sequence, 143 residues long: Large ribosomal subunit protein uL16 (143 aa).

The protein belongs to the universal ribosomal protein uL16 family. In terms of assembly, part of the 50S ribosomal subunit.

Functionally, binds 23S rRNA and is also seen to make contacts with the A and possibly P site tRNAs. The sequence is that of Large ribosomal subunit protein uL16 from Caulobacter vibrioides (strain ATCC 19089 / CIP 103742 / CB 15) (Caulobacter crescentus).